The following is a 670-amino-acid chain: Probable metal-nicotianamine transporter YSL4 (670 aa).

Helical transmembrane passes span 35 to 55 (ITIR…IITH), 59 to 79 (LTIG…FFFI), 107 to 127 (CVVS…LIAM), 151 to 171 (GLWW…FCLV), 273 to 293 (LVNC…WPFI), 318 to 338 (VFIA…KIIV), 389 to 409 (FAVS…PLIF), 416 to 436 (FVLC…YGAG), 450 to 470 (GLFI…GLAA), 507 to 527 (LGTA…WTAF), 559 to 579 (PKHC…VNLI), 601 to 621 (FYIG…MLVW), and 636 to 656 (VASG…ILSI).

This sequence belongs to the YSL (TC 2.A.67.2) family.

It localises to the membrane. Its function is as follows. May be involved in the transport of nicotianamine-chelated metals. This is Probable metal-nicotianamine transporter YSL4 (YSL4) from Arabidopsis thaliana (Mouse-ear cress).